Consider the following 332-residue polypeptide: Adenosine receptor A2b (332 aa).

Residues 1 to 8 are Extracellular-facing; that stretch reads MLLETQDA. The chain crosses the membrane as a helical span at residues 9–33; it reads LYVALELVIAALSVAGNVLVCAAVG. The Cytoplasmic segment spans residues 34–43; that stretch reads TANTLQTPTN. A helical transmembrane segment spans residues 44-67; the sequence is YFLVSLAAADVAVGLFAIPFAITI. Topologically, residues 68–78 are extracellular; that stretch reads SLGFCTDFYGC. Cysteines 78 and 171 form a disulfide. A helical transmembrane segment spans residues 79–101; sequence LFLACFVLVLTQSSIFSLLAVAV. The Cytoplasmic segment spans residues 102–121; the sequence is DRYLAICVPLRYKSLVTGTR. The helical transmembrane segment at 122–144 threads the bilayer; the sequence is ARGVIAVLWVLAFGIGLTPFLGW. Residues 145–178 are Extracellular-facing; the sequence is NSKDSATNNCTEPWDGTTNESCCLVKCLFENVVP. N-linked (GlcNAc...) asparagine glycosylation is found at Asn-153 and Asn-163. Glu-174 contributes to the adenosine binding site. The helical transmembrane segment at 179 to 203 threads the bilayer; that stretch reads MSYMVYFNFFGCVLPPLLIMLVIYI. Residues 204 to 235 lie on the Cytoplasmic side of the membrane; the sequence is KIFLVACRQLQRTELMDHSRTTLQREIHAAKS. Residues 236 to 259 form a helical membrane-spanning segment; the sequence is LAMIVGIFALCWLPVHAVNCVTLF. Asn-254 lines the adenosine pocket. Topologically, residues 260-267 are extracellular; the sequence is QPAQGKNK. The helical transmembrane segment at 268–291 threads the bilayer; the sequence is PKWAMNMAILLSHANSVVNPIVYA. Adenosine-binding residues include Ser-279 and His-280. Residues 292–332 lie on the Cytoplasmic side of the membrane; it reads YRNRDFRYTFHKIISRYLLCQADVKSGNGQAGVQPALGVGL. Cys-311 is lipidated: S-palmitoyl cysteine.

It belongs to the G-protein coupled receptor 1 family.

The protein localises to the cell membrane. Receptor for adenosine. The activity of this receptor is mediated by G proteins which activate adenylyl cyclase. The polypeptide is Adenosine receptor A2b (ADORA2B) (Homo sapiens (Human)).